Reading from the N-terminus, the 394-residue chain is Putative 8-amino-7-oxononanoate synthase (394 aa).

Arg-23 contacts substrate. Residue 110 to 111 (GY) participates in pyridoxal 5'-phosphate binding. His-135 is a substrate binding site. Pyridoxal 5'-phosphate-binding positions include Ser-182, 207-210 (DEAH), and 238-241 (TFSK). Lys-241 is modified (N6-(pyridoxal phosphate)lysine). Thr-355 serves as a coordination point for substrate.

This sequence belongs to the class-II pyridoxal-phosphate-dependent aminotransferase family. BioF subfamily. As to quaternary structure, homodimer. Pyridoxal 5'-phosphate is required as a cofactor.

It carries out the reaction 6-carboxyhexanoyl-[ACP] + L-alanine + H(+) = (8S)-8-amino-7-oxononanoate + holo-[ACP] + CO2. The protein operates within cofactor biosynthesis; biotin biosynthesis. Its function is as follows. Catalyzes the decarboxylative condensation of pimeloyl-[acyl-carrier protein] and L-alanine to produce 8-amino-7-oxononanoate (AON), [acyl-carrier protein], and carbon dioxide. This is Putative 8-amino-7-oxononanoate synthase (bioF) from Bacillus cereus (strain Q1).